Consider the following 319-residue polypeptide: Ribonuclease Z (319 aa).

His-62, His-64, Asp-66, His-67, His-145, Asp-215, and His-273 together coordinate Zn(2+). Catalysis depends on Asp-66, which acts as the Proton acceptor.

This sequence belongs to the RNase Z family. Homodimer. The cofactor is Zn(2+).

The enzyme catalyses Endonucleolytic cleavage of RNA, removing extra 3' nucleotides from tRNA precursor, generating 3' termini of tRNAs. A 3'-hydroxy group is left at the tRNA terminus and a 5'-phosphoryl group is left at the trailer molecule.. In terms of biological role, zinc phosphodiesterase, which displays some tRNA 3'-processing endonuclease activity. Probably involved in tRNA maturation, by removing a 3'-trailer from precursor tRNA. This Borreliella afzelii (strain PKo) (Borrelia afzelii) protein is Ribonuclease Z.